We begin with the raw amino-acid sequence, 715 residues long: Methionine--tRNA ligase (715 aa).

The 'HIGH' region signature appears at 17-27 (PYANGPIHLGH). Cys148, Cys151, Cys161, and Cys164 together coordinate Zn(2+). The 'KMSKS' region motif lies at 359-363 (KMSKS). Position 362 (Lys362) interacts with ATP. A tRNA-binding domain is found at 614–715 (DLSKVELRVG…KDAKPGDRLK (102 aa)).

The protein belongs to the class-I aminoacyl-tRNA synthetase family. MetG type 1 subfamily. In terms of assembly, homodimer. The cofactor is Zn(2+).

The protein resides in the cytoplasm. It carries out the reaction tRNA(Met) + L-methionine + ATP = L-methionyl-tRNA(Met) + AMP + diphosphate. Is required not only for elongation of protein synthesis but also for the initiation of all mRNA translation through initiator tRNA(fMet) aminoacylation. This chain is Methionine--tRNA ligase, found in Leptospira interrogans serogroup Icterohaemorrhagiae serovar Lai (strain 56601).